The sequence spans 225 residues: Uracil-DNA glycosylase (225 aa).

D65 functions as the Proton acceptor in the catalytic mechanism.

This sequence belongs to the uracil-DNA glycosylase (UDG) superfamily. UNG family.

The protein resides in the cytoplasm. The catalysed reaction is Hydrolyzes single-stranded DNA or mismatched double-stranded DNA and polynucleotides, releasing free uracil.. Functionally, excises uracil residues from the DNA which can arise as a result of misincorporation of dUMP residues by DNA polymerase or due to deamination of cytosine. This is Uracil-DNA glycosylase from Bacillus cytotoxicus (strain DSM 22905 / CIP 110041 / 391-98 / NVH 391-98).